A 194-amino-acid polypeptide reads, in one-letter code: Leucyl/phenylalanyl-tRNA--protein transferase (194 aa).

The protein belongs to the L/F-transferase family.

Its subcellular location is the cytoplasm. The catalysed reaction is N-terminal L-lysyl-[protein] + L-leucyl-tRNA(Leu) = N-terminal L-leucyl-L-lysyl-[protein] + tRNA(Leu) + H(+). It carries out the reaction N-terminal L-arginyl-[protein] + L-leucyl-tRNA(Leu) = N-terminal L-leucyl-L-arginyl-[protein] + tRNA(Leu) + H(+). It catalyses the reaction L-phenylalanyl-tRNA(Phe) + an N-terminal L-alpha-aminoacyl-[protein] = an N-terminal L-phenylalanyl-L-alpha-aminoacyl-[protein] + tRNA(Phe). Its function is as follows. Functions in the N-end rule pathway of protein degradation where it conjugates Leu, Phe and, less efficiently, Met from aminoacyl-tRNAs to the N-termini of proteins containing an N-terminal arginine or lysine. This chain is Leucyl/phenylalanyl-tRNA--protein transferase, found in Chlorobium phaeobacteroides (strain DSM 266 / SMG 266 / 2430).